We begin with the raw amino-acid sequence, 248 residues long: UPF0736 protein BCAH187_A1335 (248 aa).

This sequence belongs to the UPF0736 family.

In Bacillus cereus (strain AH187), this protein is UPF0736 protein BCAH187_A1335.